Here is a 349-residue protein sequence, read N- to C-terminus: sn-glycerol-3-phosphate import ATP-binding protein UgpC (349 aa).

The region spanning 4–235 (ITLKDVHKTY…PATAFVATFI (232 aa)) is the ABC transporter domain. 37 to 44 (GPSGCGKS) is a binding site for ATP.

This sequence belongs to the ABC transporter superfamily. sn-glycerol-3-phosphate importer (TC 3.A.1.1.3) family. The complex is composed of two ATP-binding proteins (UgpC), two transmembrane proteins (UgpA and UgpE) and a solute-binding protein (UgpB).

Its subcellular location is the cell inner membrane. It catalyses the reaction sn-glycerol 3-phosphate(out) + ATP + H2O = sn-glycerol 3-phosphate(in) + ADP + phosphate + H(+). Its function is as follows. Part of the ABC transporter complex UgpBAEC involved in sn-glycerol-3-phosphate (G3P) import. Responsible for energy coupling to the transport system. The chain is sn-glycerol-3-phosphate import ATP-binding protein UgpC from Rhizobium meliloti (strain 1021) (Ensifer meliloti).